We begin with the raw amino-acid sequence, 706 residues long: Solute carrier organic anion transporter family member 6C1 (706 aa).

The tract at residues 1 to 24 is disordered; that stretch reads MAHVRNKKSDDKKAMVVAKEDTNK. The Cytoplasmic segment spans residues 1 to 94; that stretch reads MAHVRNKKSD…PFVQRFNNID (94 aa). Residues 7-24 are compositionally biased toward basic and acidic residues; the sequence is KKSDDKKAMVVAKEDTNK. A helical transmembrane segment spans residues 95–118; sequence GFMTLYVAAVLIHGALFAVVDMTL. Topologically, residues 119 to 130 are extracellular; it reads NIYQVQFSLTRT. A helical transmembrane segment spans residues 131 to 151; that stretch reads EWYLMDFSDYIASFVVAIIIA. Residues 152–159 lie on the Cytoplasmic side of the membrane; that stretch reads HFGSKGNR. Residues 160-180 form a helical membrane-spanning segment; that stretch reads TRWIAASCILMGLESMLFAFP. At 181–218 the chain is on the extracellular side; the sequence is FFTYEIIIPGRQSIELCMEENEKRNIICGNSVPNRSKC. An N-linked (GlcNAc...) asparagine glycan is attached at N214. A helical membrane pass occupies residues 219 to 241; the sequence is IYFHIAGQCIHGIAGMPIYILGI. Residues 242–253 lie on the Cytoplasmic side of the membrane; it reads TFIFDHIPTSSC. A helical transmembrane segment spans residues 254 to 277; sequence GFYLAIGHSAYLIGYLLGMVGGLQ. The Extracellular portion of the chain corresponds to 278–301; the sequence is NFQPPPKEKTVEIEPAKVYQLLQS. The helical transmembrane segment at 302-324 threads the bilayer; it reads GWWKTFLIIAAISFCVSFMMVCF. Residues 325 to 374 are Cytoplasmic-facing; sequence PTSLPGAHKLRLAKRKEPPTIDRRLKDMKIQPHLKGFLHNIWHILKNPLM. The helical transmembrane segment at 375 to 396 threads the bilayer; sequence LTQAICKVSEYLTFNTSLYFLP. Over 397-410 the chain is Extracellular; sequence HHLQTQFLITPGIA. Residues 411 to 432 form a helical membrane-spanning segment; it reads SLLTGAFVLPGGIIGHFLGGLI. Topologically, residues 433 to 445 are cytoplasmic; sequence VDRLEMTNKNKLK. The chain crosses the membrane as a helical span at residues 446 to 466; the sequence is FTLVTTVVSVGLFLLIFFVEC. Topologically, residues 467 to 565 are extracellular; the sequence is QTTTFAGINE…IAGTCDSDCL (99 aa). Residues 485–540 form the Kazal-like domain; the sequence is GNLTADCNEYCDCTTSLYTSICGRDEKEYFSPCFAGCKATKVSQTEKTYYNCSCIK. N-linked (GlcNAc...) asparagine glycosylation is present at N486. Disulfide bonds link C491-C521, C497-C517, and C506-C538. N-linked (GlcNAc...) asparagine glycosylation occurs at N535. Residues 566–589 form a helical membrane-spanning segment; that stretch reads KLPLFFAFYFSATVFSNMCSIPVI. The Cytoplasmic portion of the chain corresponds to 590 to 604; that stretch reads SIILQSVPANFTSLS. The helical transmembrane segment at 605-624 threads the bilayer; sequence LGVTYAIVKFVASVPAPLLF. Residues 625–652 are Extracellular-facing; that stretch reads RLSSAIACIYWDNNRCGGKERCWIYNKN. The chain crosses the membrane as a helical span at residues 653-675; the sequence is ILVYEFMGIWMSSQLIIVLLNIY. Residues 676 to 706 are Cytoplasmic-facing; that stretch reads AIQIHDVVVHGEITESKTTVKDVKEQKERKA.

Belongs to the organo anion transporter (TC 2.A.60) family. In terms of assembly, component of the CatSper complex or CatSpermasome composed of the core pore-forming members CATSPER1, CATSPER2, CATSPER3 and CATSPER4 as well as auxiliary members CATSPERB, CATSPERG2, CATSPERD, CATSPERE, CATSPERZ, C2CD6/CATSPERT, SLCO6C1, TMEM249, TMEM262 and EFCAB9. HSPA1 may be an additional auxiliary complex member. The core complex members CATSPER1, CATSPER2, CATSPER3 and CATSPER4 form a heterotetrameric channel. The auxiliary CATSPERB, CATSPERG2, CATSPERD and CATSPERE subunits form a pavilion-like structure over the pore which stabilizes the complex through interactions with CATSPER4, CATSPER3, CATSPER1 and CATSPER2 respectively. SLCO6C1 interacts with CATSPERE and TMEM262/CATSPERH interacts with CATSPERB, further stabilizing the complex. C2CD6/CATSPERT interacts at least with CATSPERD and is required for targeting the CatSper complex in the flagellar membrane.

The protein resides in the cell projection. The protein localises to the cilium. Its subcellular location is the flagellum membrane. In terms of biological role, auxiliary component of the CatSper complex, a complex involved in sperm cell hyperactivation. In Mus musculus (Mouse), this protein is Solute carrier organic anion transporter family member 6C1.